Reading from the N-terminus, the 433-residue chain is MASLGSYAKKHKVTIIGSGNWGSTIAKIVAESTREHKDVFEEDVQMWVFEEKVTIPKDSPYYESEEPQKLTEVINKHHENVKYLPGIKLPSNIIANPSLTDAVRDSSVLVFNLPHEFLGKVCQQLNGHIVPFARGISCIKGVDVSGSGINLFCEVIGEKLGIYCGALSGANVASQIAAEEGVSETTIAYDPPPIDSSRAATPRDRSPNYDSTSANKLPDLTVTSADSNGKDDRGRRTKAKLTPVPESYPPLDHGTLQILFDRPYFSVSMVSDVAGVSLSGALKNIVALAAGFVDGKGWGSNVQSAVIRVGLAEMLKFAREFFGESVDPFTILLESAGVADVITSCISGRNFRCASMAVKRGVSVAEIEEKELNGQKLQGTSTAKEVNSLLKARGREGDYPLFTTVNEILEGKARVDDLPKLVIRQKHTIEKSG.

NAD(+) contacts are provided by residues 17 to 22, Phe49, and Phe117; that span reads GSGNWG. Position 140 (Lys140) interacts with substrate. Residue Ala173 coordinates NAD(+). A disordered region spans residues 187 to 246; the sequence is IAYDPPPIDSSRAATPRDRSPNYDSTSANKLPDLTVTSADSNGKDDRGRRTKAKLTPVPE. A compositionally biased stretch (polar residues) spans 208 to 227; it reads NYDSTSANKLPDLTVTSADS. The Proton acceptor role is filled by Lys283. NAD(+) is bound by residues Arg349 and Gln378. Residue 349–350 participates in substrate binding; that stretch reads RN.

The protein belongs to the NAD-dependent glycerol-3-phosphate dehydrogenase family.

The enzyme catalyses sn-glycerol 3-phosphate + NAD(+) = dihydroxyacetone phosphate + NADH + H(+). The sequence is that of Glycerol-3-phosphate dehydrogenase [NAD(+)] from Pyricularia oryzae (strain Y34) (Rice blast fungus).